The sequence spans 154 residues: Myoglobin (154 aa).

Residues 2–148 (GLSDGEWQLV…FRNDIAAKYK (147 aa)) form the Globin domain. Ser4 bears the Phosphoserine mark. Residue His65 coordinates nitrite. His65 is a binding site for O2. Thr68 is modified (phosphothreonine). Heme b is bound at residue His94.

Belongs to the globin family. Monomeric.

It is found in the cytoplasm. Its subcellular location is the sarcoplasm. It catalyses the reaction Fe(III)-heme b-[protein] + nitric oxide + H2O = Fe(II)-heme b-[protein] + nitrite + 2 H(+). It carries out the reaction H2O2 + AH2 = A + 2 H2O. Functionally, monomeric heme protein which primary function is to store oxygen and facilitate its diffusion within muscle tissues. Reversibly binds oxygen through a pentacoordinated heme iron and enables its timely and efficient release as needed during periods of heightened demand. Depending on the oxidative conditions of tissues and cells, and in addition to its ability to bind oxygen, it also has a nitrite reductase activity whereby it regulates the production of bioactive nitric oxide. Under stress conditions, like hypoxia and anoxia, it also protects cells against reactive oxygen species thanks to its pseudoperoxidase activity. The sequence is that of Myoglobin (MB) from Ctenodactylus gundi (Northern gundi).